A 390-amino-acid chain; its full sequence is Putative gustatory receptor 59d (390 aa).

Residues 1 to 38 lie on the Cytoplasmic side of the membrane; the sequence is MADLLKLCLRIAYAYGRLTGVINFKIDLKTGQALVTRG. The chain crosses the membrane as a helical span at residues 39–59; the sequence is ATLISVSTHLLIFALLLYQTM. Topologically, residues 60-75 are extracellular; the sequence is RKSVVNVMWKYANSLH. Residues 76 to 96 form a helical membrane-spanning segment; the sequence is EYVFLVIAGFRVVCVFLELVS. The Cytoplasmic portion of the chain corresponds to 97–128; it reads RWSQRRTFVRLFNSFRRLYQRNPDIIQYCRRS. A helical transmembrane segment spans residues 129-149; that stretch reads IVSKFFCVTMTETLHIIVTLA. At 150-156 the chain is on the extracellular side; that stretch reads MMRNRLS. A helical membrane pass occupies residues 157–177; it reads IALALRIWAVLSLTAIINVII. Over 178 to 252 the chain is Cytoplasmic; the sequence is TQYYVATACV…NLSTAYEGEV (75 aa). A helical membrane pass occupies residues 253 to 273; sequence VCLVITYYLNMLGTSYLLFSI. Over 274-283 the chain is Extracellular; it reads SKYGNFGNNL. Residues 284–304 form a helical membrane-spanning segment; sequence LVIITLCGIVYFVFYVVDCWI. The Cytoplasmic portion of the chain corresponds to 305 to 366; the sequence is NAFNVFYLLD…MYGLFEFGRG (62 aa). A helical membrane pass occupies residues 367 to 383; the sequence is TSFAVFNSLLTHSLLLI. Topologically, residues 384–390 are extracellular; sequence QYDVQNF.

This sequence belongs to the insect chemoreceptor superfamily. Gustatory receptor (GR) family. Gr22e subfamily. In terms of tissue distribution, expressed in the adult labellar chemosensory neurons. In larvae, is expressed in neurons of the terminal external chemosensory organ as well as in the dorsal pharyngeal sense organ.

The protein localises to the cell membrane. In terms of biological role, probable gustatory receptor which mediates acceptance or avoidance behavior, depending on its substrates. The protein is Putative gustatory receptor 59d (Gr59d) of Drosophila melanogaster (Fruit fly).